Here is a 727-residue protein sequence, read N- to C-terminus: Synaptic vesicle glycoprotein 2C (727 aa).

The segment at 1–57 (MEDSYKDRTSLMKGAKDIAKEVKKQTVKKVNQAVDRAQDEYTQRSYSRFQDEDDDDD) is interaction with SYT1. Residues 1–154 (MEDSYKDRTS…CGHGRFQWAL (154 aa)) are Cytoplasmic-facing. Positions 22–120 (VKKQTVKKVN…QPKGDEYKDR (99 aa)) are disordered. 2 positions are modified to phosphoserine: serine 75 and serine 76. At threonine 79 the chain carries Phosphothreonine. Residues 155-175 (FFVLGMALMADGVEVFVVGFV) form a helical membrane-spanning segment. Residues 176 to 191 (LPSAETDLCIPNSGSG) are Extracellular-facing. Residues 192-212 (WLGSIVYLGMMVGAFFWGGLA) form a helical membrane-spanning segment. The Cytoplasmic segment spans residues 213–226 (DKVGRKQSLLICMS). A helical transmembrane segment spans residues 227–247 (VNGFFAFLSSFVQGYGFFLLC). Residue arginine 248 is a topological domain, extracellular. A helical membrane pass occupies residues 249–269 (LLSGFGIGGAIPTVFSYFAEV). The Cytoplasmic portion of the chain corresponds to 270-280 (LAREKRGEHLS). The helical transmembrane segment at 281 to 301 (WLCMFWMIGGIYASAMAWAII) threads the bilayer. Residues 302-320 (PHYGWSFSMGSAYQFHSWR) lie on the Extracellular side of the membrane. A helical transmembrane segment spans residues 321 to 341 (VFVIVCALPCVSSVVALTFMP). Residues 342-437 (ESPRFLLEVG…PVRENTIKLT (96 aa)) are Cytoplasmic-facing. A helical membrane pass occupies residues 438–458 (IVWFTLSFGYYGLSVWFPDVI). The Extracellular portion of the chain corresponds to 459–578 (KHLQSDEYAL…CQITFDDDYS (120 aa)). Tyrosine 466 is subject to Phosphotyrosine. Residues asparagine 480, asparagine 484, asparagine 534, asparagine 559, and asparagine 565 are each glycosylated (N-linked (GlcNAc...) asparagine). The interval 529–566 (NTYFKNCTFIDTLFENTDFEPYKFIDSEFQNCSFLHNK) is (Microbial infection) C.botulinum neurotoxin type A-binding. Residues 579 to 599 (AYWIYFVNFLGTLAVLPGNIV) traverse the membrane as a helical segment. The Cytoplasmic portion of the chain corresponds to 600–609 (SALLMDRIGR). The chain crosses the membrane as a helical span at residues 610-630 (LTMLGGSMVLSGISCFFLWFG). The Extracellular portion of the chain corresponds to 631–636 (TSESMM). Residues 637-657 (IGMLCLYNGLTISAWNSLDVV) traverse the membrane as a helical segment. Topologically, residues 658–670 (TVELYPTDRRATG) are cytoplasmic. The helical transmembrane segment at 671 to 693 (FGFLNALCKAAAVLGNLIFGSLV) threads the bilayer. Residues 694–697 (SITK) are Extracellular-facing. The helical transmembrane segment at 698-716 (AIPILLASTVLVCGGLVGL) threads the bilayer. Topologically, residues 717-727 (RLPDTRTQVLM) are cytoplasmic.

The protein belongs to the major facilitator superfamily. As to quaternary structure, interacts with SYT1 in a calcium-dependent manner. In terms of assembly, (Microbial infection) Interacts with C.botulinum neurotoxin type A (BoNT/A, botA). (Microbial infection) Interacts with C.botulinum neurotoxin type F (BoNT/F). Interaction requires glycosylation of SV2 proteins. N-glycosylated. Expressed at high levels in very few brain areas including the striatum, midbrain and hindbrain, and in the olfactory bulb. Expressed at lower levels in cerebrum, hippocampus and cerebellum (at protein level). Mainly expressed in brain; also detected in lung, liver, kidney.

The protein resides in the cytoplasmic vesicle. Its subcellular location is the secretory vesicle. It is found in the synaptic vesicle membrane. Its function is as follows. Plays a role in the control of regulated secretion in neural and endocrine cells, enhancing selectively low-frequency neurotransmission. Positively regulates vesicle fusion by maintaining the readily releasable pool of secretory vesicles. Functionally, (Microbial infection) Receptor for C.botulinum neurotoxin type A (BoNT/A, botA); the toxin binds Sv2c via extracellular loop 4. Restores uptake of BoNT/A in rat cells that are deleted for SV2 receptor. In terms of biological role, (Microbial infection) Possible receptor for C.botulinum neurotoxin type D (BoNT/D, botD); BoNT/D does not bind to extracellular loop 4 as do BoNT/A and BoNT/E. Another group does not find a convincing interaction with SV2. (Microbial infection) Receptor for C.botulinum neurotoxin type F (BoNT/F); binding requires glycosylation of Asn-573. The protein is Synaptic vesicle glycoprotein 2C (Sv2c) of Rattus norvegicus (Rat).